Consider the following 68-residue polypeptide: DNA gyrase inhibitor YacG (68 aa).

4 residues coordinate Zn(2+): Cys10, Cys13, Cys29, and Cys33.

Belongs to the DNA gyrase inhibitor YacG family. In terms of assembly, interacts with GyrB. It depends on Zn(2+) as a cofactor.

In terms of biological role, inhibits all the catalytic activities of DNA gyrase by preventing its interaction with DNA. Acts by binding directly to the C-terminal domain of GyrB, which probably disrupts DNA binding by the gyrase. The polypeptide is DNA gyrase inhibitor YacG (Haemophilus influenzae (strain PittGG)).